Here is a 345-residue protein sequence, read N- to C-terminus: Phosphoribosylformylglycinamidine cyclo-ligase (345 aa).

The protein belongs to the AIR synthase family.

It localises to the cytoplasm. It carries out the reaction 2-formamido-N(1)-(5-O-phospho-beta-D-ribosyl)acetamidine + ATP = 5-amino-1-(5-phospho-beta-D-ribosyl)imidazole + ADP + phosphate + H(+). The protein operates within purine metabolism; IMP biosynthesis via de novo pathway; 5-amino-1-(5-phospho-D-ribosyl)imidazole from N(2)-formyl-N(1)-(5-phospho-D-ribosyl)glycinamide: step 2/2. The protein is Phosphoribosylformylglycinamidine cyclo-ligase of Shewanella baltica (strain OS185).